Reading from the N-terminus, the 610-residue chain is UvrABC system protein C (610 aa).

In terms of domain architecture, GIY-YIG spans 16 to 94 (SQPGVYRMYD…IKLYQPRYNV (79 aa)). The region spanning 204–239 (DQVLTQLISRMETASQNLEFEEAARIRDQIQAVRRV) is the UVR domain.

It belongs to the UvrC family. In terms of assembly, interacts with UvrB in an incision complex.

Its subcellular location is the cytoplasm. Its function is as follows. The UvrABC repair system catalyzes the recognition and processing of DNA lesions. UvrC both incises the 5' and 3' sides of the lesion. The N-terminal half is responsible for the 3' incision and the C-terminal half is responsible for the 5' incision. This Escherichia coli O45:K1 (strain S88 / ExPEC) protein is UvrABC system protein C.